We begin with the raw amino-acid sequence, 354 residues long: uncharacterized protein (354 aa).

This sequence belongs to the asfivirus B354L family.

This is an uncharacterized protein from African swine fever virus (isolate Tick/South Africa/Pretoriuskop Pr4/1996) (ASFV).